The sequence spans 456 residues: UDP-N-acetylglucosamine 1-carboxyvinyltransferase (456 aa).

Phosphoenolpyruvate is bound at residue 34-35 (KN). Residue Arg-104 coordinates UDP-N-acetyl-alpha-D-glucosamine. Cys-128 serves as the catalytic Proton donor. Cys-128 carries the 2-(S-cysteinyl)pyruvic acid O-phosphothioketal modification. UDP-N-acetyl-alpha-D-glucosamine is bound by residues Asp-319 and Ile-341.

The protein belongs to the EPSP synthase family. MurA subfamily.

The protein resides in the cytoplasm. It carries out the reaction phosphoenolpyruvate + UDP-N-acetyl-alpha-D-glucosamine = UDP-N-acetyl-3-O-(1-carboxyvinyl)-alpha-D-glucosamine + phosphate. It functions in the pathway cell wall biogenesis; peptidoglycan biosynthesis. Its function is as follows. Cell wall formation. Adds enolpyruvyl to UDP-N-acetylglucosamine. The protein is UDP-N-acetylglucosamine 1-carboxyvinyltransferase of Prochlorococcus marinus (strain MIT 9301).